Consider the following 108-residue polypeptide: UPF0060 membrane protein Msil_1658 (108 aa).

Helical transmembrane passes span 5 to 25, 31 to 51, 62 to 82, and 88 to 108; these read LVYV…WAWL, SLWL…LTLI, AYGG…EGVW, and LGGA…PRPA.

The protein belongs to the UPF0060 family.

It is found in the cell inner membrane. This is UPF0060 membrane protein Msil_1658 from Methylocella silvestris (strain DSM 15510 / CIP 108128 / LMG 27833 / NCIMB 13906 / BL2).